Reading from the N-terminus, the 824-residue chain is Vesicle-fusing ATPase (824 aa).

Residues 582–587 (RGMIVW) and 622–629 (AKTGKTSL) contribute to the ATP site. Mg(2+) is bound at residue threonine 627.

Belongs to the AAA ATPase family. As to quaternary structure, homohexamer. Mg(2+) is required as a cofactor.

It localises to the cytoplasm. The enzyme catalyses ATP + H2O = ADP + phosphate + H(+). In terms of biological role, required for vesicle-mediated transport. Catalyzes the fusion of transport vesicles within the Golgi cisternae. Is also required for transport from the endoplasmic reticulum to the Golgi stack. Seems to function as a fusion protein required for the delivery of cargo proteins to all compartments of the Golgi stack independent of vesicle origin. The sequence is that of Vesicle-fusing ATPase (nsf-1) from Caenorhabditis elegans.